Reading from the N-terminus, the 231-residue chain is Large ribosomal subunit protein uL1 (231 aa).

The protein belongs to the universal ribosomal protein uL1 family. Part of the 50S ribosomal subunit.

In terms of biological role, binds directly to 23S rRNA. The L1 stalk is quite mobile in the ribosome, and is involved in E site tRNA release. Its function is as follows. Protein L1 is also a translational repressor protein, it controls the translation of the L11 operon by binding to its mRNA. This Clostridium kluyveri (strain NBRC 12016) protein is Large ribosomal subunit protein uL1.